A 309-amino-acid polypeptide reads, in one-letter code: MSSFEDKKTTGITFNIQKYSVHDGPGIRTVVFLKGCPLRCRWCSNPESQRRRIELAYNTGRCLTLTKCVRCVEVCTMNAITRADDDTISIDRALCEECGMFCAEACPSKALITYGTTRTVDEVLNVVEQDSVFYARSGGGITLSGGEPFAQPAFALALLREARRRHIHTAVETCGYASWSDMEPALEYVKFVHYDIKSLDDEKHRSATGVSNVRIIENLRNIRSRFPALKVVVRTPVIPGFNDTEEDIRAIARLTAELEVEYQLLPYHRLGTQKYTFLDRQAPMGEVVLDEQVMTALNAVVAAEHATDG.

Residues 22-309 (HDGPGIRTVV…VVAAEHATDG (288 aa)) enclose the Radical SAM core domain. [4Fe-4S] cluster is bound by residues Cys-36, Cys-40, Cys-43, Cys-62, Cys-68, Cys-71, Cys-75, Cys-95, Cys-98, Cys-102, and Cys-106. 42-44 (WCS) is an S-adenosyl-L-methionine binding site. 4Fe-4S ferredoxin-type domains lie at 53 to 85 (IELA…RADD) and 86 to 117 (DTIS…YGTT). S-adenosyl-L-methionine-binding positions include Gly-146, 195-197 (DIK), and His-268.

Belongs to the organic radical-activating enzymes family. As to quaternary structure, monomer. It depends on [4Fe-4S] cluster as a cofactor.

The enzyme catalyses glycyl-[protein] + reduced [flavodoxin] + S-adenosyl-L-methionine = glycin-2-yl radical-[protein] + semiquinone [flavodoxin] + 5'-deoxyadenosine + L-methionine + H(+). It functions in the pathway organosulfur degradation; alkanesulfonate degradation. Involved in an anaerobic respiration pathway that converts the sulfonate isethionate (2-hydroxyethanesulfonate) to ammonia, acetate and sulfide. Catalyzes activation of the isethionate sulfite-lyase IslA under anaerobic conditions by generation of an organic free radical on a glycine residue, via a homolytic cleavage of S-adenosyl-L-methionine (SAM). The chain is Isethionate sulfite-lyase activating enzyme from Oleidesulfovibrio alaskensis (strain ATCC BAA-1058 / DSM 17464 / G20) (Desulfovibrio alaskensis).